The following is a 334-amino-acid chain: Hemin transport system permease protein HmuU (334 aa).

Transmembrane regions (helical) follow at residues 9-29 (LMLGFLLILLVILALGSANMG), 60-80 (LLAVVVGCALAVSGTIMQGLF), 96-116 (AALCVGLIIVMPFSLPPLLAL), 117-137 (YSHMVGAFIGSLAISTIIFTL), 149-169 (LLAGIAINALCGAAVGVLTYI), 191-211 (WSTLLVASSLILPTCILGLLQ), 244-264 (AILIGAAVAVSGVIGFIGLVV), 278-298 (WLLPGAALGGACLLLTADTLA), and 306-326 (EMPVGLLTSLLGGPYFLWLIL).

It belongs to the binding-protein-dependent transport system permease family. FecCD subfamily.

It is found in the cell inner membrane. Functionally, part of the binding-protein-dependent transport system for hemin; probably responsible for the translocation of the substrate across the membrane. This is Hemin transport system permease protein HmuU (hmuU) from Yersinia pestis.